A 210-amino-acid polypeptide reads, in one-letter code: Large ribosomal subunit protein uL3 (210 aa).

The tract at residues 134–153 (THGNSLSHRAPGSIGQNQTP) is disordered. At Gln-151 the chain carries N5-methylglutamine.

The protein belongs to the universal ribosomal protein uL3 family. Part of the 50S ribosomal subunit. Forms a cluster with proteins L14 and L19. In terms of processing, methylated by PrmB.

One of the primary rRNA binding proteins, it binds directly near the 3'-end of the 23S rRNA, where it nucleates assembly of the 50S subunit. This Aeromonas salmonicida (strain A449) protein is Large ribosomal subunit protein uL3.